Reading from the N-terminus, the 405-residue chain is Coenzyme F420 hydrogenase subunit alpha (405 aa).

Ni(2+) contacts are provided by Cys-63, Cys-66, Cys-380, and Cys-383.

It belongs to the [NiFe]/[NiFeSe] hydrogenase large subunit family. As to quaternary structure, heterocomplex of the form (alpha(1)beta(1)gamma(1))(8). Requires Ni(2+) as cofactor. Iron-sulfur cluster serves as cofactor. It depends on FAD as a cofactor.

It carries out the reaction oxidized coenzyme F420-(gamma-L-Glu)(n) + H2 + H(+) = reduced coenzyme F420-(gamma-L-Glu)(n). Functionally, reduces the physiological low-potential two-electron acceptor coenzyme F420, and the artificial one-electron acceptor methylviologen. The protein is Coenzyme F420 hydrogenase subunit alpha (frhA) of Methanothermobacter thermautotrophicus (strain ATCC 29096 / DSM 1053 / JCM 10044 / NBRC 100330 / Delta H) (Methanobacterium thermoautotrophicum).